The following is a 270-amino-acid chain: UPF0354 protein BcerKBAB4_4524 (270 aa).

Belongs to the UPF0354 family.

The chain is UPF0354 protein BcerKBAB4_4524 from Bacillus mycoides (strain KBAB4) (Bacillus weihenstephanensis).